A 322-amino-acid chain; its full sequence is Acetylglutamate kinase (322 aa).

Residues 89-90 (GG), Arg-111, and Asn-217 contribute to the substrate site.

It belongs to the acetylglutamate kinase family. ArgB subfamily.

It is found in the cytoplasm. It carries out the reaction N-acetyl-L-glutamate + ATP = N-acetyl-L-glutamyl 5-phosphate + ADP. Its pathway is amino-acid biosynthesis; L-arginine biosynthesis; N(2)-acetyl-L-ornithine from L-glutamate: step 2/4. Catalyzes the ATP-dependent phosphorylation of N-acetyl-L-glutamate. The sequence is that of Acetylglutamate kinase from Ehrlichia ruminantium (strain Gardel).